Reading from the N-terminus, the 192-residue chain is Putative metal-sulfur cluster biosynthesis proteins YuaD (192 aa).

In terms of domain architecture, MOSC spans 15–179; the sequence is ADTKSFVTKQ…VYTGDEIEVH (165 aa).

This is Putative metal-sulfur cluster biosynthesis proteins YuaD (yuaD) from Bacillus subtilis (strain 168).